Here is a 193-residue protein sequence, read N- to C-terminus: Orotate phosphoribosyltransferase (193 aa).

Residue 114–122 coordinates 5-phospho-alpha-D-ribose 1-diphosphate; the sequence is EDVITTGGS. Orotate contacts are provided by Thr-118 and Arg-146.

The protein belongs to the purine/pyrimidine phosphoribosyltransferase family. PyrE subfamily. In terms of assembly, homodimer. Mg(2+) serves as cofactor.

The catalysed reaction is orotidine 5'-phosphate + diphosphate = orotate + 5-phospho-alpha-D-ribose 1-diphosphate. It functions in the pathway pyrimidine metabolism; UMP biosynthesis via de novo pathway; UMP from orotate: step 1/2. Catalyzes the transfer of a ribosyl phosphate group from 5-phosphoribose 1-diphosphate to orotate, leading to the formation of orotidine monophosphate (OMP). The chain is Orotate phosphoribosyltransferase from Chlorobium phaeobacteroides (strain DSM 266 / SMG 266 / 2430).